The primary structure comprises 297 residues: Nicotinate-nucleotide pyrophosphorylase [carboxylating] (297 aa).

The interval 8–12 is important for hexamer formation; it reads LLLPP. Quinolinate is bound by residues R102, 138–139, 160–161, K171, E201, D222, 248–250, and G270; these read RK, HR, and SGG.

The protein belongs to the NadC/ModD family. In terms of assembly, hexamer formed by 3 homodimers.

The enzyme catalyses nicotinate beta-D-ribonucleotide + CO2 + diphosphate = quinolinate + 5-phospho-alpha-D-ribose 1-diphosphate + 2 H(+). It participates in cofactor biosynthesis; NAD(+) biosynthesis; nicotinate D-ribonucleotide from quinolinate: step 1/1. With respect to regulation, activity toward QA is slightly repressed by phosphoribosylpyrophosphate (PRPP) in both a competitive and a non-competitive manner. Competitively inhibited by phthalic acid (PHT). In terms of biological role, involved in the catabolism of quinolinic acid (QA). The sequence is that of Nicotinate-nucleotide pyrophosphorylase [carboxylating] (QPRT) from Homo sapiens (Human).